Reading from the N-terminus, the 93-residue chain is Bombyxin B-11 (93 aa).

The N-terminal stretch at 1-22 is a signal peptide; sequence MMKTAVMFILVVVISLTYSSEE. 3 disulfide bridges follow: C30/C75, C42/C92, and C74/C79. Positions 49–64 are cleaved as a propeptide — bombyxin B-11 C peptide; sequence GGAQYAPYWQETYLRS.

The protein belongs to the insulin family. In terms of assembly, heterodimer of a B chain and an A chain linked by two disulfide bonds.

The protein resides in the secreted. Its function is as follows. Brain peptide responsible for activation of prothoracic glands to produce ecdysone in insects. This Bombyx mori (Silk moth) protein is Bombyxin B-11 (BBXB11).